Reading from the N-terminus, the 49-residue chain is Large ribosomal subunit protein bL33A (49 aa).

The protein belongs to the bacterial ribosomal protein bL33 family.

The chain is Large ribosomal subunit protein bL33A (rpmG1) from Enterococcus faecalis (strain ATCC 700802 / V583).